The following is a 768-amino-acid chain: 5-methyltetrahydropteroyltriglutamate--homocysteine methyltransferase (768 aa).

5-methyltetrahydropteroyltri-L-glutamate-binding positions include 17–20 (REWK) and lysine 113. L-homocysteine contacts are provided by residues 440–442 (IGS) and glutamate 493. L-methionine-binding positions include 440–442 (IGS) and glutamate 493. Tryptophan 570 is a 5-methyltetrahydropteroyltri-L-glutamate binding site. An L-homocysteine-binding site is contributed by aspartate 608. Aspartate 608 is a binding site for L-methionine. Glutamate 614 lines the 5-methyltetrahydropteroyltri-L-glutamate pocket. Positions 650, 652, and 674 each coordinate Zn(2+). The active-site Proton donor is histidine 703. Residue cysteine 735 participates in Zn(2+) binding.

The protein belongs to the vitamin-B12 independent methionine synthase family. Requires Zn(2+) as cofactor.

The catalysed reaction is 5-methyltetrahydropteroyltri-L-glutamate + L-homocysteine = tetrahydropteroyltri-L-glutamate + L-methionine. Its pathway is amino-acid biosynthesis; L-methionine biosynthesis via de novo pathway; L-methionine from L-homocysteine (MetE route): step 1/1. In terms of biological role, catalyzes the transfer of a methyl group from 5-methyltetrahydrofolate to homocysteine resulting in methionine formation. In Lactiplantibacillus plantarum (strain ATCC BAA-793 / NCIMB 8826 / WCFS1) (Lactobacillus plantarum), this protein is 5-methyltetrahydropteroyltriglutamate--homocysteine methyltransferase.